Reading from the N-terminus, the 204-residue chain is Protein OPG030 (204 aa).

One can recognise a BACK domain in the interval 95-177 (FLRQYINNNI…ITYSELTNAI (83 aa)).

Belongs to the orthopoxvirus OPG030 family.

The polypeptide is Protein OPG030 (OPG30) (Bos taurus (Bovine)).